Here is a 373-residue protein sequence, read N- to C-terminus: tRNA-specific 2-thiouridylase MnmA (373 aa).

ATP is bound by residues 12 to 19 (GMSGGVDS) and methionine 38. An interaction with target base in tRNA region spans residues 98 to 100 (NPD). Cysteine 103 acts as the Nucleophile in catalysis. Residues cysteine 103 and cysteine 200 are joined by a disulfide bond. ATP is bound at residue glycine 127. The segment at 150 to 152 (KDQ) is interaction with tRNA. Cysteine 200 (cysteine persulfide intermediate) is an active-site residue. The interaction with tRNA stretch occupies residues 312–313 (RY).

This sequence belongs to the MnmA/TRMU family.

The protein localises to the cytoplasm. The catalysed reaction is S-sulfanyl-L-cysteinyl-[protein] + uridine(34) in tRNA + AH2 + ATP = 2-thiouridine(34) in tRNA + L-cysteinyl-[protein] + A + AMP + diphosphate + H(+). Its function is as follows. Catalyzes the 2-thiolation of uridine at the wobble position (U34) of tRNA, leading to the formation of s(2)U34. The polypeptide is tRNA-specific 2-thiouridylase MnmA (Streptococcus pneumoniae (strain CGSP14)).